Reading from the N-terminus, the 167-residue chain is Small ribosomal subunit protein uS5 (167 aa).

Residues 12–75 (LQEKLIAVNR…EKARRNIVTV (64 aa)) enclose the S5 DRBM domain.

It belongs to the universal ribosomal protein uS5 family. In terms of assembly, part of the 30S ribosomal subunit. Contacts proteins S4 and S8.

With S4 and S12 plays an important role in translational accuracy. Its function is as follows. Located at the back of the 30S subunit body where it stabilizes the conformation of the head with respect to the body. This is Small ribosomal subunit protein uS5 from Shewanella baltica (strain OS223).